A 1877-amino-acid polypeptide reads, in one-letter code: Proprotein convertase subtilisin/kexin type 5 (1877 aa).

The first 34 residues, methionine 1–threonine 34, serve as a signal peptide directing secretion. Positions arginine 35–arginine 116 are excised as a propeptide. The Extracellular segment spans residues aspartate 117–threonine 1768. The Peptidase S8 domain occupies methionine 136–valine 455. Residues aspartate 173 and histidine 214 each act as charge relay system in the active site. Residues asparagine 227 and asparagine 383 are each glycosylated (N-linked (GlcNAc...) asparagine). Residue serine 388 is the Charge relay system of the active site. The P/Homo B domain maps to threonine 463 to glutamine 603. The Cell attachment site signature appears at arginine 521 to aspartate 523. 22 FU repeats span residues glutamate 632–histidine 682, lysine 685–glutamate 732, lysine 736–phenylalanine 779, glycine 781–leucine 826, tyrosine 834–isoleucine 881, glutamine 884–glutamate 929, lysine 931–proline 981, glycine 984–glutamine 1030, tyrosine 1034–glycine 1079, lysine 1081–glycine 1123, leucine 1127–proline 1168, threonine 1206–proline 1248, serine 1252–alanine 1299, aspartate 1301–alanine 1345, glutamate 1347–proline 1390, methionine 1392–lysine 1438, asparagine 1442–tryptophan 1487, serine 1491–threonine 1536, serine 1540–glycine 1585, serine 1589–alanine 1636, alanine 1640–arginine 1685, and asparagine 1691–arginine 1738. The CRM (Cys-rich motif) stretch occupies residues cysteine 638–cysteine 1753. Residue asparagine 667 is glycosylated (N-linked (GlcNAc...) asparagine). N-linked (GlcNAc...) asparagine glycosylation is found at asparagine 754, asparagine 804, and asparagine 854. Asparagine 951 and asparagine 1016 each carry an N-linked (GlcNAc...) asparagine glycan. Residue asparagine 1220 is glycosylated (N-linked (GlcNAc...) asparagine). An N-linked (GlcNAc...) asparagine glycan is attached at asparagine 1317. Asparagine 1523 carries N-linked (GlcNAc...) asparagine glycosylation. Residues asparagine 1711 and asparagine 1733 are each glycosylated (N-linked (GlcNAc...) asparagine). The chain crosses the membrane as a helical span at residues alanine 1769–tryptophan 1789. Residues arginine 1790–glutamine 1877 are Cytoplasmic-facing. AC regions lie at residues valine 1825 to methionine 1844 and tyrosine 1856 to glutamine 1877.

It belongs to the peptidase S8 family. As to expression, PC5A is expressed in most tissues but is most abundant in the intestine and adrenals. PC5B is expressed in the intestine, adrenals and lung but not in the brain.

The protein resides in the secreted. Its subcellular location is the endomembrane system. In terms of biological role, serine endoprotease that processes various proproteins by cleavage at paired basic amino acids, recognizing the RXXX[KR]R consensus motif. Likely functions in the constitutive and regulated secretory pathways. Plays an essential role in pregnancy establishment by proteolytic activation of a number of important factors such as BMP2, CALD1 and alpha-integrins. May be responsible for the maturation of gastrointestinal peptides. May be involved in the cellular proliferation of adrenal cortex via the activation of growth factors. In Mus musculus (Mouse), this protein is Proprotein convertase subtilisin/kexin type 5 (Pcsk5).